Here is a 158-residue protein sequence, read N- to C-terminus: Small ribosomal subunit protein uS9 (158 aa).

Polar residues predominate over residues 1-20 (MSETMQSLDQLSALKTTQPD). The segment at 1 to 29 (MSETMQSLDQLSALKTTQPDAPTYTKKVD) is disordered.

The protein belongs to the universal ribosomal protein uS9 family.

This is Small ribosomal subunit protein uS9 from Rhodopseudomonas palustris (strain BisB5).